The chain runs to 192 residues: dTTP/UTP pyrophosphatase (192 aa).

Asp70 serves as the catalytic Proton acceptor.

It belongs to the Maf family. YhdE subfamily. Requires a divalent metal cation as cofactor.

It is found in the cytoplasm. It catalyses the reaction dTTP + H2O = dTMP + diphosphate + H(+). The enzyme catalyses UTP + H2O = UMP + diphosphate + H(+). Functionally, nucleoside triphosphate pyrophosphatase that hydrolyzes dTTP and UTP. May have a dual role in cell division arrest and in preventing the incorporation of modified nucleotides into cellular nucleic acids. In Alkaliphilus metalliredigens (strain QYMF), this protein is dTTP/UTP pyrophosphatase.